We begin with the raw amino-acid sequence, 104 residues long: Pyrimidine/purine nucleoside phosphorylase (104 aa).

It belongs to the nucleoside phosphorylase PpnP family.

It carries out the reaction a purine D-ribonucleoside + phosphate = a purine nucleobase + alpha-D-ribose 1-phosphate. It catalyses the reaction adenosine + phosphate = alpha-D-ribose 1-phosphate + adenine. The catalysed reaction is cytidine + phosphate = cytosine + alpha-D-ribose 1-phosphate. The enzyme catalyses guanosine + phosphate = alpha-D-ribose 1-phosphate + guanine. It carries out the reaction inosine + phosphate = alpha-D-ribose 1-phosphate + hypoxanthine. It catalyses the reaction thymidine + phosphate = 2-deoxy-alpha-D-ribose 1-phosphate + thymine. The catalysed reaction is uridine + phosphate = alpha-D-ribose 1-phosphate + uracil. The enzyme catalyses xanthosine + phosphate = alpha-D-ribose 1-phosphate + xanthine. Its function is as follows. Catalyzes the phosphorolysis of diverse nucleosides, yielding D-ribose 1-phosphate and the respective free bases. Can use uridine, adenosine, guanosine, cytidine, thymidine, inosine and xanthosine as substrates. Also catalyzes the reverse reactions. This Geobacter metallireducens (strain ATCC 53774 / DSM 7210 / GS-15) protein is Pyrimidine/purine nucleoside phosphorylase.